The primary structure comprises 241 residues: Fatty acid metabolism regulator protein (241 aa).

The HTH gntR-type domain occupies 11–79 (QSPAALAEEY…HGKPTKVNNI (69 aa)). A DNA-binding region (H-T-H motif) is located at residues 39-58 (ERDLADKIGVTRTTLREVLQ).

In terms of assembly, homodimer.

Its subcellular location is the cytoplasm. Multifunctional regulator of fatty acid metabolism. This Haemophilus influenzae (strain PittEE) protein is Fatty acid metabolism regulator protein.